The sequence spans 503 residues: Probable cytosol aminopeptidase (503 aa).

Lys268 and Asp273 together coordinate Mn(2+). Lys280 is a catalytic residue. The Mn(2+) site is built by Asp291, Asp350, and Glu352. Arg354 is a catalytic residue.

The protein belongs to the peptidase M17 family. Requires Mn(2+) as cofactor.

Its subcellular location is the cytoplasm. It catalyses the reaction Release of an N-terminal amino acid, Xaa-|-Yaa-, in which Xaa is preferably Leu, but may be other amino acids including Pro although not Arg or Lys, and Yaa may be Pro. Amino acid amides and methyl esters are also readily hydrolyzed, but rates on arylamides are exceedingly low.. It carries out the reaction Release of an N-terminal amino acid, preferentially leucine, but not glutamic or aspartic acids.. Its function is as follows. Presumably involved in the processing and regular turnover of intracellular proteins. Catalyzes the removal of unsubstituted N-terminal amino acids from various peptides. This chain is Probable cytosol aminopeptidase, found in Herminiimonas arsenicoxydans.